The following is a 382-amino-acid chain: MAKRDYYEVLGVSRGASADELKKAYRTKAKELHPDRNADNPQAEAQFKEVNEAYDVLRDADKKAAYDRYGHAAFEGGMGGGGGARGAYGQQADFASAFSDVFEDLFGDFMGGRGGAARSRAQRGSDLRYNLRVTLDEAYRGVQKTINVPASVACDSCKGTGAEGGAEPVTCPTCSGMGKVRAQQGFFTVERTCPTCNGMGQIVKNPCKSCHGAGRVEKERTLSVNIPAGVETGTRIRLAGEGEAGMRGGPSGDLYIFIEVREHALFQRDGVHLFCRVPVSITAAALGGEVEVPTIDGGSSRVKIPAGSQTGKQMRLRGKGMPALRGGGAGDMLIELAVETPVNLTARQKELLREFEKLSEDNNPEGKSFFSKVKGFWDGMTG.

The J domain occupies 5–70 (DYYEVLGVSR…DKKAAYDRYG (66 aa)). The segment at 141–219 (GVQKTINVPA…CHGAGRVEKE (79 aa)) adopts a CR-type zinc-finger fold. Residues cysteine 154, cysteine 157, cysteine 171, cysteine 174, cysteine 193, cysteine 196, cysteine 207, and cysteine 210 each coordinate Zn(2+). CXXCXGXG motif repeat units lie at residues 154 to 161 (CDSCKGTG), 171 to 178 (CPTCSGMG), 193 to 200 (CPTCNGMG), and 207 to 214 (CKSCHGAG).

It belongs to the DnaJ family. Homodimer. Zn(2+) serves as cofactor.

It localises to the cytoplasm. Its function is as follows. Participates actively in the response to hyperosmotic and heat shock by preventing the aggregation of stress-denatured proteins and by disaggregating proteins, also in an autonomous, DnaK-independent fashion. Unfolded proteins bind initially to DnaJ; upon interaction with the DnaJ-bound protein, DnaK hydrolyzes its bound ATP, resulting in the formation of a stable complex. GrpE releases ADP from DnaK; ATP binding to DnaK triggers the release of the substrate protein, thus completing the reaction cycle. Several rounds of ATP-dependent interactions between DnaJ, DnaK and GrpE are required for fully efficient folding. Also involved, together with DnaK and GrpE, in the DNA replication of plasmids through activation of initiation proteins. This Cereibacter sphaeroides (strain ATCC 17025 / ATH 2.4.3) (Rhodobacter sphaeroides) protein is Chaperone protein DnaJ.